A 735-amino-acid polypeptide reads, in one-letter code: Ion-translocating oxidoreductase complex subunit C (735 aa).

2 consecutive 4Fe-4S ferredoxin-type domains span residues 368–397 (MGAP…QQLY) and 407–436 (KATA…VQYF). Residues Cys377, Cys380, Cys383, Cys387, Cys416, Cys419, Cys422, and Cys426 each contribute to the [4Fe-4S] cluster site. Residues 538–715 (KQAAHPMADS…PADPRKAAVA (178 aa)) form a disordered region. Residues 556–565 (KAAVEAAIAR) show a composition bias toward low complexity.

It belongs to the 4Fe4S bacterial-type ferredoxin family. RnfC subfamily. In terms of assembly, the complex is composed of six subunits: RsxA, RsxB, RsxC, RsxD, RsxE and RsxG. It depends on [4Fe-4S] cluster as a cofactor.

The protein localises to the cell inner membrane. Part of a membrane-bound complex that couples electron transfer with translocation of ions across the membrane. Required to maintain the reduced state of SoxR. The chain is Ion-translocating oxidoreductase complex subunit C from Salmonella typhimurium (strain LT2 / SGSC1412 / ATCC 700720).